Here is a 270-residue protein sequence, read N- to C-terminus: Urease accessory protein UreD (270 aa).

This sequence belongs to the UreD family. As to quaternary structure, ureD, UreF and UreG form a complex that acts as a GTP-hydrolysis-dependent molecular chaperone, activating the urease apoprotein by helping to assemble the nickel containing metallocenter of UreC. The UreE protein probably delivers the nickel.

The protein localises to the cytoplasm. Its function is as follows. Required for maturation of urease via the functional incorporation of the urease nickel metallocenter. This is Urease accessory protein UreD from Actinobacillus pleuropneumoniae serotype 7 (strain AP76).